The sequence spans 405 residues: MKLPIYLDYAATTPVDERVAKEMMQCLTMDGNFGNPASRSHRFGWQAEEVVDQARTDVADLINADPREIVFTSGATESNNLAIKGAAQFYKKKGKHIITAKTEHKAVIDTCRELERQGFEVTYMDVEENGLLDLQKLADTMRDDTVLVSIMHVNNELGVIQDIATIGEMCRERKIMFHVDAAQSAGKVLIDVQQLKVDFMSFSGHKVYGPKGVGALYVRRKPRARLEAQMHGGGHERGMRSGTLATHQLVGMGTAFRVAKQDFEKDHAHISALRKRLIDGIMSDMEEVYFNGTQDQSVPGIVNISFNFVEGESLLMAVKDIAVSSGSACTSASLEPSYVLRALGRNDELAHSSIRFSIGRFTTEEEIDYTVELMKNSIGRLREMSPLWEMHQEGIDLDSVEWAHH.

Pyridoxal 5'-phosphate is bound by residues A75–T76, N155, Q183, and S203–H205. K206 carries the N6-(pyridoxal phosphate)lysine modification. A pyridoxal 5'-phosphate-binding site is contributed by T243. The Cysteine persulfide intermediate role is filled by C329. Residue C329 participates in [2Fe-2S] cluster binding.

It belongs to the class-V pyridoxal-phosphate-dependent aminotransferase family. NifS/IscS subfamily. In terms of assembly, homodimer. Forms a heterotetramer with IscU, interacts with other sulfur acceptors. The cofactor is pyridoxal 5'-phosphate.

It is found in the cytoplasm. The catalysed reaction is (sulfur carrier)-H + L-cysteine = (sulfur carrier)-SH + L-alanine. It functions in the pathway cofactor biosynthesis; iron-sulfur cluster biosynthesis. In terms of biological role, master enzyme that delivers sulfur to a number of partners involved in Fe-S cluster assembly, tRNA modification or cofactor biosynthesis. Catalyzes the removal of elemental sulfur atoms from cysteine to produce alanine. Functions as a sulfur delivery protein for Fe-S cluster synthesis onto IscU, an Fe-S scaffold assembly protein, as well as other S acceptor proteins. This chain is Cysteine desulfurase IscS, found in Pseudoalteromonas translucida (strain TAC 125).